Consider the following 224-residue polypeptide: Orotate phosphoribosyltransferase (224 aa).

5-phospho-alpha-D-ribose 1-diphosphate contacts are provided by residues K26, 73–74 (YK), R100, K101, K104, H106, and 127–135 (EDVTTAGTS). Orotate contacts are provided by T131 and R160.

This sequence belongs to the purine/pyrimidine phosphoribosyltransferase family. PyrE subfamily. Homodimer. Mg(2+) is required as a cofactor.

The catalysed reaction is orotidine 5'-phosphate + diphosphate = orotate + 5-phospho-alpha-D-ribose 1-diphosphate. The protein operates within pyrimidine metabolism; UMP biosynthesis via de novo pathway; UMP from orotate: step 1/2. In terms of biological role, catalyzes the transfer of a ribosyl phosphate group from 5-phosphoribose 1-diphosphate to orotate, leading to the formation of orotidine monophosphate (OMP). This Clostridium beijerinckii (strain ATCC 51743 / NCIMB 8052) (Clostridium acetobutylicum) protein is Orotate phosphoribosyltransferase.